The chain runs to 246 residues: NH(3)-dependent NAD(+) synthetase (246 aa).

29–36 (GLSGGIDS) is a binding site for ATP. D35 provides a ligand contact to Mg(2+). Residue R110 coordinates deamido-NAD(+). T130 contacts ATP. Residue E135 coordinates Mg(2+). K159 and S181 together coordinate ATP.

Belongs to the NAD synthetase family. Homodimer.

The catalysed reaction is deamido-NAD(+) + NH4(+) + ATP = AMP + diphosphate + NAD(+) + H(+). It functions in the pathway cofactor biosynthesis; NAD(+) biosynthesis; NAD(+) from deamido-NAD(+) (ammonia route): step 1/1. In terms of biological role, catalyzes the ATP-dependent amidation of deamido-NAD to form NAD. Uses ammonia as a nitrogen source. The protein is NH(3)-dependent NAD(+) synthetase of Campylobacter jejuni subsp. doylei (strain ATCC BAA-1458 / RM4099 / 269.97).